Here is a 41-residue protein sequence, read N- to C-terminus: U3-theraphotoxin-Hs1a (41 aa).

3 disulfide bridges follow: Cys2–Cys16, Cys9–Cys37, and Cys17–Cys40.

It belongs to the neurotoxin 14 (magi-1) family. 01 (HNTX-16) subfamily. As to expression, expressed by the venom gland.

The protein localises to the secreted. Functionally, intracerebroventricular injection paralyzes mice. Has no effect on voltage-gated sodium currents. The protein is U3-theraphotoxin-Hs1a of Cyriopagopus schmidti (Chinese bird spider).